Consider the following 259-residue polypeptide: Imidazole glycerol phosphate synthase subunit HisF (259 aa).

Residues Asp-11 and Asp-130 contribute to the active site.

The protein belongs to the HisA/HisF family. In terms of assembly, heterodimer of HisH and HisF.

Its subcellular location is the cytoplasm. It carries out the reaction 5-[(5-phospho-1-deoxy-D-ribulos-1-ylimino)methylamino]-1-(5-phospho-beta-D-ribosyl)imidazole-4-carboxamide + L-glutamine = D-erythro-1-(imidazol-4-yl)glycerol 3-phosphate + 5-amino-1-(5-phospho-beta-D-ribosyl)imidazole-4-carboxamide + L-glutamate + H(+). The protein operates within amino-acid biosynthesis; L-histidine biosynthesis; L-histidine from 5-phospho-alpha-D-ribose 1-diphosphate: step 5/9. IGPS catalyzes the conversion of PRFAR and glutamine to IGP, AICAR and glutamate. The HisF subunit catalyzes the cyclization activity that produces IGP and AICAR from PRFAR using the ammonia provided by the HisH subunit. This is Imidazole glycerol phosphate synthase subunit HisF from Acidovorax ebreus (strain TPSY) (Diaphorobacter sp. (strain TPSY)).